The following is an 80-amino-acid chain: D-alanyl carrier protein 1 (80 aa).

The 80-residue stretch at 1 to 80 (MTMDDTKATV…KIVAKVENLQ (80 aa)) folds into the Carrier domain. Position 38 is an O-(pantetheine 4'-phosphoryl)serine (serine 38).

It belongs to the DltC family. In terms of processing, 4'-phosphopantetheine is transferred from CoA to a specific serine of apo-DCP.

Its subcellular location is the cytoplasm. Its pathway is cell wall biogenesis; lipoteichoic acid biosynthesis. Carrier protein involved in the D-alanylation of lipoteichoic acid (LTA). The loading of thioester-linked D-alanine onto DltC is catalyzed by D-alanine--D-alanyl carrier protein ligase DltA. The DltC-carried D-alanyl group is further transferred to cell membrane phosphatidylglycerol (PG) by forming an ester bond, probably catalyzed by DltD. D-alanylation of LTA plays an important role in modulating the properties of the cell wall in Gram-positive bacteria, influencing the net charge of the cell wall. The sequence is that of D-alanyl carrier protein 1 from Lactiplantibacillus plantarum (strain ATCC BAA-793 / NCIMB 8826 / WCFS1) (Lactobacillus plantarum).